Consider the following 144-residue polypeptide: Large ribosomal subunit protein uL15 (144 aa).

The segment at 1–52 is disordered; the sequence is MKLHTLKSTPGARVEKHRVGRGHAAGKGKQAGKGQSGQNKRHGHRLGFEGGQ. A compositionally biased stretch (basic residues) spans 15 to 26; it reads EKHRVGRGHAAG.

This sequence belongs to the universal ribosomal protein uL15 family. In terms of assembly, part of the 50S ribosomal subunit.

In terms of biological role, binds to the 23S rRNA. The polypeptide is Large ribosomal subunit protein uL15 (Mycoplasmopsis agalactiae (strain NCTC 10123 / CIP 59.7 / PG2) (Mycoplasma agalactiae)).